A 280-amino-acid chain; its full sequence is 2-dehydro-3-deoxyphosphooctonate aldolase (280 aa).

It belongs to the KdsA family.

It localises to the cytoplasm. It carries out the reaction D-arabinose 5-phosphate + phosphoenolpyruvate + H2O = 3-deoxy-alpha-D-manno-2-octulosonate-8-phosphate + phosphate. It functions in the pathway carbohydrate biosynthesis; 3-deoxy-D-manno-octulosonate biosynthesis; 3-deoxy-D-manno-octulosonate from D-ribulose 5-phosphate: step 2/3. It participates in bacterial outer membrane biogenesis; lipopolysaccharide biosynthesis. In Rhizobium meliloti (strain 1021) (Ensifer meliloti), this protein is 2-dehydro-3-deoxyphosphooctonate aldolase.